Consider the following 299-residue polypeptide: GTPase Era (299 aa).

In terms of domain architecture, Era-type G spans 5–172 (KSGFVSIIGR…IDVLKSFLPE (168 aa)). A G1 region spans residues 13–20 (GRPNVGKS). 13-20 (GRPNVGKS) is a GTP binding site. Positions 39-43 (QTTRN) are G2. The tract at residues 60 to 63 (DTPG) is G3. GTP-binding positions include 60–64 (DTPGI) and 122–125 (NKID). The G4 stretch occupies residues 122-125 (NKID). The G5 stretch occupies residues 151–153 (ISA). One can recognise a KH type-2 domain in the interval 203–280 (TSEEIPHAIG…YLELWVKVQR (78 aa)).

This sequence belongs to the TRAFAC class TrmE-Era-EngA-EngB-Septin-like GTPase superfamily. Era GTPase family. In terms of assembly, monomer.

The protein resides in the cytoplasm. Its subcellular location is the cell membrane. An essential GTPase that binds both GDP and GTP, with rapid nucleotide exchange. Plays a role in 16S rRNA processing and 30S ribosomal subunit biogenesis and possibly also in cell cycle regulation and energy metabolism. This chain is GTPase Era, found in Staphylococcus epidermidis (strain ATCC 12228 / FDA PCI 1200).